Here is a 628-residue protein sequence, read N- to C-terminus: Rac GTPase-activating protein 1 (628 aa).

Residue Met1 is modified to N-acetylmethionine. Residues 33 to 110 adopt a coiled-coil conformation; the sequence is QVVKDFEDFR…IQLIRDILMC (78 aa). Positions 107-286 are interaction with SLC26A8; that stretch reads ILMCDTSGSI…GTPQNTGGMR (180 aa). Ser150 is modified (phosphoserine; by PLK1). Residue Ser155 is modified to Phosphoserine. Ser158 carries the post-translational modification Phosphoserine; by PLK1. At Thr162 the chain carries Phosphothreonine. 2 positions are modified to phosphoserine; by PLK1: Ser165 and Ser171. The interval 179 to 201 is disordered; that stretch reads KKREKRRSNSRQFIDGPPGPVKK. Phosphoserine occurs at positions 204, 207, and 215. A disordered region spans residues 242-284; that stretch reads SWTRSRGKSGPLQPVNSDSALNSRPLEPRTDTDNLGTPQNTGG. Lys249 is covalently cross-linked (Glycyl lysine isopeptide (Lys-Gly) (interchain with G-Cter in SUMO2)). Position 258 is a phosphoserine (Ser258). The span at 274 to 283 shows a compositional bias: polar residues; that stretch reads DNLGTPQNTG. The Phorbol-ester/DAG-type zinc finger occupies 287–336; the sequence is LHDFVSKTVIKPESCVPCGKRIKFGKLSLKCRDCRLVSHPECRDRCPLPC. Thr343 bears the Phosphothreonine mark. In terms of domain architecture, Rho-GAP spans 350 to 540; that stretch reads GMLADFVSQA…RLLSLPLEYW (191 aa). Ser388 carries the post-translational modification Phosphoserine; by AURKB. A Glycyl lysine isopeptide (Lys-Gly) (interchain with G-Cter in SUMO2) cross-link involves residue Lys405. Ser411 is modified (phosphoserine; by AURKB). A phosphothreonine mark is found at Thr564, Thr577, Thr585, and Thr602.

As to quaternary structure, heterotetramer of two molecules each of RACGAP1 and KIF23. Found in the centralspindlin complex. Associates with alpha-, beta- and gamma-tubulin and microtubules. Interacts via its Rho-GAP domain with RND2. Associates with AURKB during M phase. Interacts via its Rho-GAP domain and basic region with PRC1. The interaction with PRC1 inhibits its GAP activity towards CDC42 in vitro, which may be required for maintaining normal spindle morphology. Interacts with SLC26A8 via its N-terminus. Interacts with ECT2; the interaction is direct, occurs at anaphase and during cytokinesis in a microtubule-dependent manner, is enhanced by phosphorylation by PLK1 and phosphorylation at Ser-165 plays a major role in mediating binding. Interacts with RAB11FIP3; the interaction occurs at late telophase. Interacts with KIF23; the interaction is direct. Phosphorylated at multiple sites in the midbody during cytokinesis. Phosphorylation by AURKB on Ser-388 at the midbody is, at least in part, responsible for exerting its latent GAP activity towards RhoA. Phosphorylation on multiple serine residues by PLK1 enhances its association with ECT2 and is critical for cleavage furrow formation. Phosphorylation on Ser-165 plays a major role in mediating interaction with ECT2. Phosphorylation on Ser-158 does not appear to contribute to binding to ECT2. Highly expressed in testis, thymus and spleen and weakly expressed in brain, heart, skeletal muscle and kidney. In testis, expression is restricted to germ cells with the highest levels of expression found in spermatocytes. Not detected in adult liver. Also expressed in fetal liver and in several hematopoietic cell lines.

It is found in the nucleus. Its subcellular location is the cytoplasm. The protein resides in the cytoskeleton. It localises to the spindle. The protein localises to the cytoplasmic vesicle. It is found in the secretory vesicle. Its subcellular location is the acrosome. The protein resides in the cleavage furrow. It localises to the midbody. The protein localises to the midbody ring. It is found in the cell membrane. Functionally, component of the centralspindlin complex that serves as a microtubule-dependent and Rho-mediated signaling required for the myosin contractile ring formation during the cell cycle cytokinesis. Required for proper attachment of the midbody to the cell membrane during cytokinesis. Sequentially binds to ECT2 and RAB11FIP3 which regulates cleavage furrow ingression and abscission during cytokinesis. Plays key roles in controlling cell growth and differentiation of hematopoietic cells through mechanisms other than regulating Rac GTPase activity. Has a critical role in erythropoiesis. Also involved in the regulation of growth-related processes in adipocytes and myoblasts. May be involved in regulating spermatogenesis and in the RACGAP1 pathway in neuronal proliferation. Shows strong GAP (GTPase activation) activity towards CDC42 and RAC1 and less towards RHOA. Essential for the early stages of embryogenesis. May play a role in regulating cortical activity through RHOA during cytokinesis. May participate in the regulation of sulfate transport in male germ cells. The protein is Rac GTPase-activating protein 1 of Mus musculus (Mouse).